The chain runs to 191 residues: Protein HP-20 homolog (191 aa).

An N-terminal signal peptide occupies residues 1 to 16 (MADLRILVSIILMTNA). A Collagen-like domain is found at 22–58 (GCTGPPGPPGHPGPPGIRGPPGIRGIPGLPGPPGTPG). The tract at residues 22 to 61 (GCTGPPGPPGHPGPPGIRGPPGIRGIPGLPGPPGTPGPSV) is disordered. Over residues 26-39 (PPGPPGHPGPPGIR) the composition is skewed to pro residues. The region spanning 64–191 (PCHRQSAFTV…VTIYFSGFLT (128 aa)) is the C1q domain.

The protein resides in the secreted. The sequence is that of Protein HP-20 homolog from Bos taurus (Bovine).